Reading from the N-terminus, the 145-residue chain is Ribosome-binding factor A (145 aa).

Over residues 122–132 (KVQRDLESAPR) the composition is skewed to basic and acidic residues. The tract at residues 122–145 (KVQRDLESAPREDDEGEPDSSSRD) is disordered.

This sequence belongs to the RbfA family. In terms of assembly, monomer. Binds 30S ribosomal subunits, but not 50S ribosomal subunits or 70S ribosomes.

It is found in the cytoplasm. One of several proteins that assist in the late maturation steps of the functional core of the 30S ribosomal subunit. Associates with free 30S ribosomal subunits (but not with 30S subunits that are part of 70S ribosomes or polysomes). Required for efficient processing of 16S rRNA. May interact with the 5'-terminal helix region of 16S rRNA. This is Ribosome-binding factor A from Methylorubrum extorquens (strain PA1) (Methylobacterium extorquens).